Reading from the N-terminus, the 83-residue chain is Male-specific opa-containing protein (83 aa).

Residues 1–18 (MNFIQIAVLFVLVAVALA) form the signal peptide. A disordered region spans residues 23–83 (DPANLPAPEA…NVNHNVITIG (61 aa)). The span at 28 to 49 (PAPEAAAAPPAAAAAPPAAAAA) shows a compositional bias: low complexity. Residues 50 to 59 (PPAPPAPPAA) show a composition bias toward pro residues.

Adult male abdomen.

In terms of biological role, may be a male specific regulatory factor. The sequence is that of Male-specific opa-containing protein (msopa) from Drosophila melanogaster (Fruit fly).